A 119-amino-acid polypeptide reads, in one-letter code: Protein TusC (119 aa).

This sequence belongs to the DsrF/TusC family. In terms of assembly, heterohexamer, formed by a dimer of trimers. The hexameric TusBCD complex contains 2 copies each of TusB, TusC and TusD. The TusBCD complex interacts with TusE.

It localises to the cytoplasm. In terms of biological role, part of a sulfur-relay system required for 2-thiolation of 5-methylaminomethyl-2-thiouridine (mnm(5)s(2)U) at tRNA wobble positions. This chain is Protein TusC, found in Citrobacter koseri (strain ATCC BAA-895 / CDC 4225-83 / SGSC4696).